A 672-amino-acid polypeptide reads, in one-letter code: MPKLEQRFDYVKIGLASPDRIRGWGERTLPNGTVVGEVTKPETINYRTLKPEMDGLFCERIFGPAKDWECHCGKYKRVRHRGIVCERCGVEVTESRVRRHRMGHIKLAAPVTHVWYLKGIPSYMAILLDMPLRDVEQIVYFNAYVVLEPGNHESLSYKQLLSEDVWLEIEDQIYSEDSEIVGVDVGIGAEALQVLLANLDLEVEAEKLREEIANSKGQKRAKLIKRLRVIDNFIATGSRPEWMVLDAIPVIPPDLRPMVQLDGGRFATSDLNDLYRRVINRNNRLARLQEILAPEIIIRNEKRMLQEAVDALIDNGRRGRTVVGANNRPLKSLSDIIEGKQGRFRQNLLGKRVDYSGRSVIVVGPKLAINQCGLPREMAIELFQPFVIHRLIRQGLVNNIKAAKKLIQKGDPNVWDVLEEVIDGHPVMLNRAPTLHRLGIQAFEPILVEGRAIQLHPLVCPAFNADFDGDQMAVHVPLSLESQAEARLLMLASNNVLSPATGRPIITPSQDMVLGCYYLTAENHKLQGSKALYFANPDDVILAYQQDKIDLHTYVYLRLAPDVEIETDKPEEIPPDIQQISDELVVHTYWMPLDSKVLPNTLGELKSEQKCENGDLVKAYNLYRIHYSQEGEIKKVYIKSRQVRQSNGLVTTQFVVTTPGRIIINQTIQSVL.

4 residues coordinate Zn(2+): cysteine 70, cysteine 72, cysteine 85, and cysteine 88. Residues aspartate 466, aspartate 468, and aspartate 470 each contribute to the Mg(2+) site.

Belongs to the RNA polymerase beta' chain family. RpoC1 subfamily. In terms of assembly, in cyanobacteria the RNAP catalytic core is composed of 2 alpha, 1 beta, 1 beta', 1 gamma and 1 omega subunit. When a sigma factor is associated with the core the holoenzyme is formed, which can initiate transcription. The cofactor is Mg(2+). Requires Zn(2+) as cofactor.

The enzyme catalyses RNA(n) + a ribonucleoside 5'-triphosphate = RNA(n+1) + diphosphate. Functionally, DNA-dependent RNA polymerase catalyzes the transcription of DNA into RNA using the four ribonucleoside triphosphates as substrates. The sequence is that of DNA-directed RNA polymerase subunit gamma from Trichodesmium erythraeum (strain IMS101).